Consider the following 139-residue polypeptide: NADH-quinone oxidoreductase subunit A (139 aa).

3 helical membrane passes run 11–31 (LWPLLLYFELVLVVVGTMLAL), 70–90 (LIAIFFVIFDLEAVFIFAWAI), and 97–117 (WPGYIEILIFIGVLVATLVYL).

Belongs to the complex I subunit 3 family. As to quaternary structure, NDH-1 is composed of 14 different subunits. Subunits NuoA, H, J, K, L, M, N constitute the membrane sector of the complex.

The protein resides in the cell inner membrane. The catalysed reaction is a quinone + NADH + 5 H(+)(in) = a quinol + NAD(+) + 4 H(+)(out). Its function is as follows. NDH-1 shuttles electrons from NADH, via FMN and iron-sulfur (Fe-S) centers, to quinones in the respiratory chain. The immediate electron acceptor for the enzyme in this species is believed to be ubiquinone. Couples the redox reaction to proton translocation (for every two electrons transferred, four hydrogen ions are translocated across the cytoplasmic membrane), and thus conserves the redox energy in a proton gradient. This chain is NADH-quinone oxidoreductase subunit A, found in Methylococcus capsulatus (strain ATCC 33009 / NCIMB 11132 / Bath).